The chain runs to 130 residues: Phosphoribosyl-AMP cyclohydrolase (130 aa).

Asp78 is a binding site for Mg(2+). Cys79 contacts Zn(2+). Mg(2+)-binding residues include Asp80 and Asp82. Residues Cys96 and Cys103 each contribute to the Zn(2+) site.

Belongs to the PRA-CH family. Homodimer. It depends on Mg(2+) as a cofactor. Zn(2+) is required as a cofactor.

Its subcellular location is the cytoplasm. The enzyme catalyses 1-(5-phospho-beta-D-ribosyl)-5'-AMP + H2O = 1-(5-phospho-beta-D-ribosyl)-5-[(5-phospho-beta-D-ribosylamino)methylideneamino]imidazole-4-carboxamide. Its pathway is amino-acid biosynthesis; L-histidine biosynthesis; L-histidine from 5-phospho-alpha-D-ribose 1-diphosphate: step 3/9. Catalyzes the hydrolysis of the adenine ring of phosphoribosyl-AMP. The sequence is that of Phosphoribosyl-AMP cyclohydrolase from Methylobacillus flagellatus (strain ATCC 51484 / DSM 6875 / VKM B-1610 / KT).